The chain runs to 75 residues: Putative membrane protein insertion efficiency factor (75 aa).

This sequence belongs to the UPF0161 family.

The protein localises to the cell membrane. Its function is as follows. Could be involved in insertion of integral membrane proteins into the membrane. This chain is Putative membrane protein insertion efficiency factor, found in Halalkalibacterium halodurans (strain ATCC BAA-125 / DSM 18197 / FERM 7344 / JCM 9153 / C-125) (Bacillus halodurans).